We begin with the raw amino-acid sequence, 770 residues long: Proprotein convertase subtilisin/kexin type 7 (770 aa).

Positions 1–36 are cleaved as a signal peptide; it reads MPKGRQKVPHLDAHLGLPICLWLELAIFFLVPQVMG. Residues 37–140 constitute a propeptide that is removed on maturation; sequence LSEAGGLDIL…EQTLLKRAKR (104 aa). At 141–666 the chain is on the extracellular side; the sequence is SIHFNDPKYP…YTITPNTLKT (526 aa). The region spanning 152 to 472 is the Peptidase S8 domain; that stretch reads QWHLNNRRSP…FGLLNAWRLV (321 aa). N-linked (GlcNAc...) asparagine glycosylation is found at Asn-166 and Asn-174. Asp-186 (charge relay system) is an active-site residue. The interval 195-228 is disordered; the sequence is DIAPNYSPEGSYDLNSNDPDPMPHPDEENGNHHG. Over residues 215–225 the composition is skewed to basic and acidic residues; that stretch reads PMPHPDEENGN. The active-site Charge relay system is His-227. Residue Asn-240 is glycosylated (N-linked (GlcNAc...) asparagine). Catalysis depends on Ser-405, which acts as the Charge relay system. The 138-residue stretch at 480–617 folds into the P/Homo B domain; it reads SVPYLASYVS…QLTLYGSMWS (138 aa). A glycan (N-linked (GlcNAc...) asparagine) is linked at Asn-510. The chain crosses the membrane as a helical span at residues 667–687; that stretch reads LVLVGCFSVFWTIYYMLEVCL. Topologically, residues 688 to 770 are cytoplasmic; it reads SQRNKASTHG…LLQGKSGQIC (83 aa).

Belongs to the peptidase S8 family. It depends on Ca(2+) as a cofactor. As to expression, widely expressed. Expressed in brain, lung, muscle, heart, liver, kidney, spleen and thymus.

It is found in the golgi apparatus. Its subcellular location is the trans-Golgi network membrane. Its activity is regulated as follows. Inhibited by zinc and copper. In terms of biological role, serine endoprotease that processes various proproteins by cleavage at paired basic amino acids, recognizing the RXXX[KR]R consensus motif. Likely functions in the constitutive secretory pathway. The polypeptide is Proprotein convertase subtilisin/kexin type 7 (Pcsk7) (Mus musculus (Mouse)).